An 812-amino-acid polypeptide reads, in one-letter code: Plasminogen (812 aa).

A signal peptide spans M1–G19. The PAN domain maps to D20–V98. 21 disulfide bridges follow: C49-C73, C53-C61, C103-C181, C124-C164, C152-C176, C185-C262, C188-C316, C206-C245, C234-C257, C275-C352, C296-C335, C324-C347, C377-C454, C398-C437, C426-C449, C481-C560, C502-C543, C531-C555, C568-C687, C578-C586, and C609-C625. 5 Kringle domains span residues C103–C181, E184–C262, C275–C352, C377–C454, and C481–C560. In terms of domain architecture, Peptidase S1 spans V582 to R810. S598 carries the post-translational modification Phosphoserine. Catalysis depends on charge relay system residues H624 and D667. At S690 the chain carries Phosphoserine. Disulfide bonds link C701–C768, C731–C747, and C758–C786. The Charge relay system role is filled by S762.

It belongs to the peptidase S1 family. Plasminogen subfamily. In terms of assembly, interacts (both mature PLG and the angiostatin peptide) with AMOT and CSPG4. Interacts (via the Kringle domains) with HRG; the interaction tethers PLG to the cell surface and enhances its activation. Interacts (via Kringle 4 domain) with ADA; the interaction stimulates PLG activation when in complex with DPP4. Angiostatin: Interacts with ATP5F1A; the interaction inhibits most of the angiogenic effects of angiostatin. Post-translationally, in the presence of the inhibitor, the activation involves only cleavage after Arg-581, yielding two chains held together by two disulfide bonds. In the absence of the inhibitor, the activation involves additionally the removal of the activation peptide.

It is found in the secreted. The catalysed reaction is Preferential cleavage: Lys-|-Xaa &gt; Arg-|-Xaa, higher selectivity than trypsin. Converts fibrin into soluble products.. With respect to regulation, converted into plasmin by plasminogen activators, both plasminogen and its activator being bound to fibrin. Cannot be activated with streptokinase. Functionally, plasmin dissolves the fibrin of blood clots and acts as a proteolytic factor in a variety of other processes including embryonic development, tissue remodeling, tumor invasion, and inflammation. In ovulation, weakens the walls of the Graafian follicle. It activates the urokinase-type plasminogen activator, collagenases and several complement zymogens, such as C1, C4 and C5. Cleavage of fibronectin and laminin leads to cell detachment and apoptosis. Also cleaves fibrin, thrombospondin and von Willebrand factor. Its role in tissue remodeling and tumor invasion may be modulated by CSPG4. Binds to cells. In terms of biological role, angiostatin is an angiogenesis inhibitor that blocks neovascularization and growth of experimental primary and metastatic tumors in vivo. The sequence is that of Plasminogen (Plg) from Mus musculus (Mouse).